The following is an 814-amino-acid chain: Glycogen phosphorylase (814 aa).

Residue Lys662 is modified to N6-(pyridoxal phosphate)lysine.

It belongs to the glycogen phosphorylase family. Pyridoxal 5'-phosphate serves as cofactor.

The enzyme catalyses [(1-&gt;4)-alpha-D-glucosyl](n) + phosphate = [(1-&gt;4)-alpha-D-glucosyl](n-1) + alpha-D-glucose 1-phosphate. In terms of biological role, phosphorylase is an important allosteric enzyme in carbohydrate metabolism. Enzymes from different sources differ in their regulatory mechanisms and in their natural substrates. However, all known phosphorylases share catalytic and structural properties. The protein is Glycogen phosphorylase (glgP) of Chlamydia trachomatis serovar D (strain ATCC VR-885 / DSM 19411 / UW-3/Cx).